A 1445-amino-acid polypeptide reads, in one-letter code: ABC-type transporter FGSG_00046 (1445 aa).

The next 11 membrane-spanning stretches (helical) occupy residues 21–41, 77–97, 119–138, 150–170, 187–207, 255–277, 297–317, 368–388, 392–412, 481–501, and 520–540; these read LFEECFLDILPWSLFLLMLLV, LILWASIAAFTTAGTVPAAAL, PSSLLGILTLLILLCDVTRV, ISILTTAALPINILLLVFESL, EIVGILNRSVFWWLNSLFILG, TLLRGGLCRLFTALFVTSQPLLL, YGLIGAYLVVYGGRAVFTALA, LQFVHEIWATPAEFGVAIFLL, VALGSLAPVIIIIVAIVGTVL, VFSTATATISPVLGFTIYVLM, and SLFSILSSSVYIFLTSVPAIF. One can recognise an ABC transmembrane type-1 1 domain in the interval 259-541; it reads GGLCRLFTAL…FLTSVPAIFS (283 aa). The region spanning 595-821 is the ABC transporter 1 domain; the sequence is IRDGSVRWKG…DEIEASTYSR (227 aa). Residue 627–634 coordinates ATP; that stretch reads GSVGSGKS. Residues 803–850 form a disordered region; sequence RNTQKDMQDDEIEASTYSREQNGPKKQEEDANHESNQSPETSQEHELA. The segment covering 824–835 has biased composition (basic and acidic residues); the sequence is NGPKKQEEDANH. The next 6 helical transmembrane spans lie at 868–888, 912–932, 1004–1024, 1026–1046, 1116–1136, and 1147–1167; these read GMGFFALSFSLSLVYSFWQNF, IGVYILCAVLALVTHTVVTWF, IPLTGVQALFAFTSALVQLVM, SIGTKWMAITFPFIIAILAII, LTLVLNLVIGAMAILMMGVTI, and IGLAFVNLTTFSQSIQSLLTW. An ABC transmembrane type-1 2 domain is found at 974–1173; that stretch reads HRAPMSYFES…LLTWWTMMEA (200 aa). The 232-residue stretch at 1210–1441 folds into the ABC transporter 2 domain; the sequence is IELKELSASY…DVSLFQDLFS (232 aa). 1244–1251 serves as a coordination point for ATP; that stretch reads GRTGSGKT.

The protein belongs to the ABC transporter superfamily. ABCC family.

Its subcellular location is the cell membrane. In terms of biological role, ABC-type transporter; part of the gene cluster that mediates the biosynthesis of gramillins A and B, bicyclic lipopeptides that induce cell death in maize leaves but not in wheat leaves. May be involved in the secretion of gramillins. The polypeptide is ABC-type transporter FGSG_00046 (Gibberella zeae (strain ATCC MYA-4620 / CBS 123657 / FGSC 9075 / NRRL 31084 / PH-1) (Wheat head blight fungus)).